Here is a 223-residue protein sequence, read N- to C-terminus: UPF0502 protein Shew185_1758 (223 aa).

It belongs to the UPF0502 family.

In Shewanella baltica (strain OS185), this protein is UPF0502 protein Shew185_1758.